The sequence spans 291 residues: tRNA dimethylallyltransferase (291 aa).

8–15 (GSTASGKT) serves as a coordination point for ATP. Residue 10–15 (TASGKT) coordinates substrate. The interaction with substrate tRNA stretch occupies residues 33–36 (DSLC).

Belongs to the IPP transferase family. Monomer. The cofactor is Mg(2+).

The enzyme catalyses adenosine(37) in tRNA + dimethylallyl diphosphate = N(6)-dimethylallyladenosine(37) in tRNA + diphosphate. Its function is as follows. Catalyzes the transfer of a dimethylallyl group onto the adenine at position 37 in tRNAs that read codons beginning with uridine, leading to the formation of N6-(dimethylallyl)adenosine (i(6)A). This is tRNA dimethylallyltransferase from Aliarcobacter butzleri (strain RM4018) (Arcobacter butzleri).